Consider the following 238-residue polypeptide: N-terminal acetyltransferase A complex catalytic subunit ARD1 (238 aa).

In terms of domain architecture, N-acetyltransferase spans 35-195; it reads YHILSWPEAS…DAYAMKKVLK (161 aa).

This sequence belongs to the acetyltransferase family. ARD1 subfamily. Component of the N-terminal acetyltransferase A (NatA) complex, which is composed of ARD1, NAT1 and NAT5. Can self-associate.

The protein resides in the cytoplasm. The enzyme catalyses N-terminal glycyl-[protein] + acetyl-CoA = N-terminal N(alpha)-acetylglycyl-[protein] + CoA + H(+). The catalysed reaction is N-terminal L-alanyl-[protein] + acetyl-CoA = N-terminal N(alpha)-acetyl-L-alanyl-[protein] + CoA + H(+). It catalyses the reaction N-terminal L-seryl-[protein] + acetyl-CoA = N-terminal N(alpha)-acetyl-L-seryl-[protein] + CoA + H(+). It carries out the reaction N-terminal L-valyl-[protein] + acetyl-CoA = N-terminal N(alpha)-acetyl-L-valyl-[protein] + CoA + H(+). The enzyme catalyses N-terminal L-cysteinyl-[protein] + acetyl-CoA = N-terminal N(alpha)-acetyl-L-cysteinyl-[protein] + CoA + H(+). The catalysed reaction is N-terminal L-threonyl-[protein] + acetyl-CoA = N-terminal N(alpha)-acetyl-L-threonyl-[protein] + CoA + H(+). Catalytic component of the NatA N-terminal acetyltransferase, which catalyzes acetylation of proteins beginning with Met-Ser, Met-Gly and Met-Ala. N-acetylation plays a role in normal eukaryotic translation and processing, protect against proteolytic degradation and protein turnover. The polypeptide is N-terminal acetyltransferase A complex catalytic subunit ARD1 (ARD1) (Saccharomyces cerevisiae (strain ATCC 204508 / S288c) (Baker's yeast)).